A 272-amino-acid polypeptide reads, in one-letter code: GTP cyclohydrolase FolE2 (272 aa).

The protein belongs to the GTP cyclohydrolase IV family.

It carries out the reaction GTP + H2O = 7,8-dihydroneopterin 3'-triphosphate + formate + H(+). It participates in cofactor biosynthesis; 7,8-dihydroneopterin triphosphate biosynthesis; 7,8-dihydroneopterin triphosphate from GTP: step 1/1. In terms of biological role, converts GTP to 7,8-dihydroneopterin triphosphate. The protein is GTP cyclohydrolase FolE2 of Aromatoleum aromaticum (strain DSM 19018 / LMG 30748 / EbN1) (Azoarcus sp. (strain EbN1)).